The sequence spans 760 residues: Ferric/cupric reductase transmembrane component 1 (760 aa).

A signal peptide spans 1–18 (MKIQQLIVFLFAVVLIDA). Residues 19 to 212 (RTPKRYSELD…NNNFNLSINY (194 aa)) lie on the Extracellular side of the membrane. N-linked (GlcNAc...) asparagine glycosylation is found at Asn78, Asn91, Asn111, Asn143, Asn155, and Asn207. The tract at residues 119–177 (TTKSSSGSKTSASASKSSKSTGSSNASKSSTNAHGSNSSTSSTSSSSSKSGKGNSGTST) is disordered. A helical membrane pass occupies residues 213-233 (GSGLLGYWAGILAIAIFANMI). Residues 234-288 (KKMFPSLTNYLSGSISNLFRKHLFLPATFRKKKAQEFSIGVYGFFDGLIPTRLET) lie on the Cytoplasmic side of the membrane. The helical transmembrane segment at 289-309 (IIVVIFVVLTGLFSALHIHHV) threads the bilayer. The Extracellular portion of the chain corresponds to 310-324 (KDNPQYATKNAELGH). A helical membrane pass occupies residues 325–345 (LIADRTGILGTFLIPLLILFG). The Ferric oxidoreductase domain occupies 330-445 (TGILGTFLIP…HIVLVVFFVV (116 aa)). At 346–371 (GRNNFLQWLTGWDFATFIMYHRWISR) the chain is on the cytoplasmic side. Heme-binding residues include His366 and His380. A helical membrane pass occupies residues 372-392 (VDVLLIIVHAITFSVSDKATG). The Extracellular portion of the chain corresponds to 393-403 (KYNTRMKRDFM). A helical membrane pass occupies residues 404 to 424 (IWGTVSTICGGFILFQAMLFF). The Cytoplasmic portion of the chain corresponds to 425–430 (RRKCYE). A helical transmembrane segment spans residues 431–451 (VFFLIHIVLVVFFVVGGYYHL). Residues His436 and His450 each coordinate heme. Residues 452 to 760 (ESQGYGDFMW…EYHEQLQTWA (309 aa)) lie on the Extracellular side of the membrane. One can recognise an FAD-binding FR-type domain in the interval 465 to 583 (AVWAFDRVVR…EGPYGEPSSA (119 aa)). Residue 575–578 (GPYG) participates in NADP(+) binding. N-linked (GlcNAc...) asparagine glycosylation is present at Asn615. 726 to 727 (CG) provides a ligand contact to NADP(+). N-linked (GlcNAc...) asparagine glycosylation occurs at Asn744.

The protein belongs to the ferric reductase (FRE) family. Requires FAD as cofactor. Heme serves as cofactor.

The protein resides in the cell membrane. It catalyses the reaction 2 a Fe(II)-siderophore + NADP(+) + H(+) = 2 a Fe(III)-siderophore + NADPH. Its function is as follows. Ferric reductase responsible for reducing extracellular iron and copper prior to import. Catalyzes the reductive uptake of Fe(3+)-salts and Fe(3+) bound to catecholate or hydroxamate siderophores. Fe(3+) is reduced to Fe(2+), which then dissociates from the siderophore and can be imported by the high-affinity Fe(2+) transport complex in the plasma membrane. Also participates in Cu(2+) reduction and Cu(+) uptake. Involved in maintenance of cell wall integrity (CWI), mitochondrial function, and interaction between the pathogen and the host. In Candida albicans (strain SC5314 / ATCC MYA-2876) (Yeast), this protein is Ferric/cupric reductase transmembrane component 1.